The primary structure comprises 321 residues: Probable GDP-L-fucose synthase (321 aa).

8–14 (GGTGLVG) provides a ligand contact to NADP(+). Y136 functions as the Proton donor/acceptor in the catalytic mechanism. Residues K140, 163 to 166 (PCNI), and H179 contribute to the NADP(+) site. Residues R187, R215, and D277 each contribute to the substrate site.

It belongs to the NAD(P)-dependent epimerase/dehydratase family. Fucose synthase subfamily. In terms of assembly, homodimer.

It catalyses the reaction GDP-beta-L-fucose + NADP(+) = GDP-4-dehydro-alpha-D-rhamnose + NADPH + H(+). It functions in the pathway nucleotide-sugar biosynthesis; GDP-L-fucose biosynthesis via de novo pathway; GDP-L-fucose from GDP-alpha-D-mannose: step 2/2. In terms of biological role, catalyzes the two-step NADP-dependent conversion of GDP-4-dehydro-6-deoxy-D-mannose to GDP-fucose, involving an epimerase and a reductase reaction. The chain is Probable GDP-L-fucose synthase (Gmer) from Drosophila melanogaster (Fruit fly).